The sequence spans 45 residues: Photosystem II reaction center protein K (45 aa).

A propeptide spanning residues 1 to 8 is cleaved from the precursor; that stretch reads MEAALLLA. A helical membrane pass occupies residues 24–44; that stretch reads LPIIPVFFLLLAFVWQAAVGF.

This sequence belongs to the PsbK family. PSII is composed of 1 copy each of membrane proteins PsbA, PsbB, PsbC, PsbD, PsbE, PsbF, PsbH, PsbI, PsbJ, PsbK, PsbL, PsbM, PsbT, PsbX, PsbY, PsbZ, Psb30/Ycf12, peripheral proteins PsbO, CyanoQ (PsbQ), PsbU, PsbV and a large number of cofactors. It forms dimeric complexes.

Its subcellular location is the cellular thylakoid membrane. Functionally, one of the components of the core complex of photosystem II (PSII). PSII is a light-driven water:plastoquinone oxidoreductase that uses light energy to abstract electrons from H(2)O, generating O(2) and a proton gradient subsequently used for ATP formation. It consists of a core antenna complex that captures photons, and an electron transfer chain that converts photonic excitation into a charge separation. The polypeptide is Photosystem II reaction center protein K (Nostoc sp. (strain PCC 7120 / SAG 25.82 / UTEX 2576)).